The following is a 579-amino-acid chain: Membrane protein insertase YidC (579 aa).

The helical transmembrane segment at 10-30 threads the bilayer; sequence LVIVTILSALILFGWSFVTKH. The segment at 35–61 is disordered; it reads PPAPTQQGKNQPKAELTAEESGDKPLK. The next 5 helical transmembrane spans lie at 330–350, 351–371, 423–443, 478–498, and 523–543; these read FDKAIDWGWFAIIEKVFFYYL, DWLFLHVGNYGLAIILMVFTI, VNPFAGCLPMFIQFPIFIALY, LLHFTPPHFLMIGVLPIILGI, and PLISVIFMAPLAAGLQVYYIF. Positions 560–572 are enriched in basic and acidic residues; the sequence is STPEERQDRAERK. The disordered stretch occupies residues 560-579; that stretch reads STPEERQDRAERKRPSKKKA.

It belongs to the OXA1/ALB3/YidC family. Type 1 subfamily. As to quaternary structure, interacts with the Sec translocase complex via SecD. Specifically interacts with transmembrane segments of nascent integral membrane proteins during membrane integration.

Its subcellular location is the cell inner membrane. In terms of biological role, required for the insertion and/or proper folding and/or complex formation of integral membrane proteins into the membrane. Involved in integration of membrane proteins that insert both dependently and independently of the Sec translocase complex, as well as at least some lipoproteins. Aids folding of multispanning membrane proteins. This is Membrane protein insertase YidC from Zymomonas mobilis subsp. mobilis (strain ATCC 31821 / ZM4 / CP4).